A 678-amino-acid chain; its full sequence is MTQIKPEVKRTEELRQLLQQASYAYYVLDTPIMEDSVYDQLYRELQQLEIQYPELTAPDSPTQRVGERPATQFTSVRHNIPLYSLENAFNIDELQGWDQRWRRQVPKIDSVEYVTELKIDGSALALTYQDGILVRGTTRGDGVMGEDITQNVRTIRSIPLRLNFEGLEILERVEVRGEAFLPLEVFKQINEERQKAGEQLFANPRNAAAGTLRQLDSRIVAKRRLAFFGYTLHIPGRDDTSIANTQWEALELLEKMGFQVNPNHKLCASIAEVAKYYEYWDTERLNLPYMTDGVVVKLNSFKLQEQLGFTQKFPRWAIALKYPAEEAPTRVENIAVNVGRTGALTPLAEMRPVQLAGTTVSRATLHNSDRIAQLDIRIGDTVIVRKAGEIIPEVVRVLKELRPAETEPFVMPTHCPVCDQAVVRESGEAVTRCVNASCAAILKGSIEHWVSRDALDIKGLGEKLVHQLVDKVLVHSVADLYELTAEKLCALERMGQKSAEKLVDAIAQSKNQPWSRVLYGLGIRHVGSVNAQLLTQKYFTVEQLATAKQSDIEGIYGIGAEIAQSVYQWFRIDANQRLIERLQAEGLQLTAPEETKAFGDGNQIFAGKTFVVTGTLPTLKRDEAKALIQKAGGKVTDSVSKKTDYLVVGEDAGSKLEKALSLGITQLSEAQLLEMLNE.

Residues aspartate 35–aspartate 39, serine 84–leucine 85, and glutamate 116 contribute to the NAD(+) site. Lysine 118 functions as the N6-AMP-lysine intermediate in the catalytic mechanism. NAD(+) is bound by residues arginine 139, glutamate 178, lysine 297, and lysine 321. Residues cysteine 415, cysteine 418, cysteine 433, and cysteine 438 each contribute to the Zn(2+) site. The BRCT domain occupies aspartate 600–glutamate 678.

Belongs to the NAD-dependent DNA ligase family. LigA subfamily. The cofactor is Mg(2+). Mn(2+) serves as cofactor.

It catalyses the reaction NAD(+) + (deoxyribonucleotide)n-3'-hydroxyl + 5'-phospho-(deoxyribonucleotide)m = (deoxyribonucleotide)n+m + AMP + beta-nicotinamide D-nucleotide.. In terms of biological role, DNA ligase that catalyzes the formation of phosphodiester linkages between 5'-phosphoryl and 3'-hydroxyl groups in double-stranded DNA using NAD as a coenzyme and as the energy source for the reaction. It is essential for DNA replication and repair of damaged DNA. This chain is DNA ligase, found in Nostoc punctiforme (strain ATCC 29133 / PCC 73102).